A 136-amino-acid chain; its full sequence is Nodulation protein K (136 aa).

The sequence is that of Nodulation protein K (nodK) from Bradyrhizobium sp. (strain ANU 289).